The primary structure comprises 282 residues: Extent of cell elongation protein 1 (282 aa).

The signal sequence occupies residues 1–18; it reads MKFSKVASFAFLALSSQA. A helical membrane pass occupies residues 68 to 92; it reads ISFAGIVSSIINQLPSIIQIIGNII.

Its subcellular location is the secreted. It localises to the host cell membrane. Its function is as follows. Secreted protein cleaved by KEX2 in 8 similar peptides (ECE1-I to ECE1-VIII). Stimulates biofilm formation. In terms of biological role, acts as a cytolytic peptide toxin that directly damages host epithelial membranes, triggers a danger response signaling pathway and activates epithelial immunity. Probably acts similarly to cationic antimicrobial peptide toxins, inducing lesions after binding to target cell membranes and causing an inward current associated with calcium influx. The polypeptide is Extent of cell elongation protein 1 (Candida tropicalis (strain ATCC MYA-3404 / T1) (Yeast)).